Here is an 819-residue protein sequence, read N- to C-terminus: Putative U-box domain-containing protein 53 (819 aa).

2 disordered regions span residues 208–309 (TSDT…NPQF) and 398–433 (KETEKFEQKRREEREAAQRREAEMKATHEAKEKEKL). Residues 223–237 (ERTSSSCSSGSGANS) show a composition bias toward low complexity. The span at 238 to 260 (DVMSNALKSNPHTLSNKRMQNLP) shows a compositional bias: polar residues. The segment covering 278–296 (DETKKRSSDAAEEASKRSS) has biased composition (basic and acidic residues). The segment covering 297–307 (PETSRSVSWNP) has biased composition (polar residues). A coiled-coil region spans residues 395–437 (IAKKETEKFEQKRREEREAAQRREAEMKATHEAKEKEKLEESS). Residues 460-728 (FSEDLKIGMG…DLEDQILPVL (269 aa)) enclose the Protein kinase domain. ATP-binding positions include 466–474 (IGMGAYGDV) and Lys487. Asp582 acts as the Proton acceptor in catalysis. Positions 748–819 (QPPSHFFCPL…AIVEWRNRNQ (72 aa)) constitute a U-box domain.

The protein belongs to the protein kinase superfamily. Ser/Thr protein kinase family.

It carries out the reaction L-seryl-[protein] + ATP = O-phospho-L-seryl-[protein] + ADP + H(+). The enzyme catalyses L-threonyl-[protein] + ATP = O-phospho-L-threonyl-[protein] + ADP + H(+). It catalyses the reaction S-ubiquitinyl-[E2 ubiquitin-conjugating enzyme]-L-cysteine + [acceptor protein]-L-lysine = [E2 ubiquitin-conjugating enzyme]-L-cysteine + N(6)-ubiquitinyl-[acceptor protein]-L-lysine.. It participates in protein modification; protein ubiquitination. Its function is as follows. Functions as an E3 ubiquitin ligase. The sequence is that of Putative U-box domain-containing protein 53 (PUB53) from Arabidopsis thaliana (Mouse-ear cress).